The following is a 388-amino-acid chain: Staphopain A (388 aa).

The signal sequence occupies residues 1-25; sequence MKRNFPKLIALSLIFSLSVTPIANA. A propeptide spanning residues 26–214 is cleaved from the precursor; it reads ESNSNIKAKD…TSQFKSNNYT (189 aa). Catalysis depends on residues Cys238, His334, and Asn355.

It belongs to the peptidase C47 family. As to quaternary structure, in the cytoplasm, prematurely activated/folded ScpA forms a stable non-covalent complex with ScpB. Post-translationally, cleavage leads to the activation of ScpA probably by an auto-catalytic manner.

The protein localises to the secreted. It catalyses the reaction Broad endopeptidase action on proteins including elastin, but rather limited hydrolysis of small-molecule substrates. Assays are conveniently made with hemoglobin, casein or Z-Phe-Arg-NHMec as substrate.. Its activity is regulated as follows. Prematurely activated/folded staphopain A is inhibited by staphostatin A (ScpB), which is probably required to protect staphylococcal cytoplasmic proteins from degradation by ScpA. Its function is as follows. Cysteine protease that plays an important role in the inhibition of host innate immune response. Cleaves host elastins found in connective tissues, pulmonary surfactant protein A in the lungs, and the chemokine receptor CXCR2 on leukocytes. Proteolytic cleavage of surfactant protein A impairs bacterial phagocytosis by neutrophils while CXCR2 degradation blocks neutrophil activation and chemotaxis. Additionally, promotes vascular leakage by activating the plasma kallikerin/kinin system, resulting in hypotension. The chain is Staphopain A (sspP) from Staphylococcus aureus (strain COL).